A 224-amino-acid chain; its full sequence is Glycerol-3-phosphate acyltransferase (224 aa).

The next 5 membrane-spanning stretches (helical) occupy residues 14–34, 64–84, 98–118, 127–147, and 160–180; these read FFPL…FAVI, TAAI…VMLV, MALV…FNFA, LGVL…TWLI, and LTAA…AWYL.

Belongs to the PlsY family. Probably interacts with PlsX.

The protein localises to the cell inner membrane. The enzyme catalyses an acyl phosphate + sn-glycerol 3-phosphate = a 1-acyl-sn-glycero-3-phosphate + phosphate. It participates in lipid metabolism; phospholipid metabolism. Its function is as follows. Catalyzes the transfer of an acyl group from acyl-phosphate (acyl-PO(4)) to glycerol-3-phosphate (G3P) to form lysophosphatidic acid (LPA). This enzyme utilizes acyl-phosphate as fatty acyl donor, but not acyl-CoA or acyl-ACP. The protein is Glycerol-3-phosphate acyltransferase of Albidiferax ferrireducens (strain ATCC BAA-621 / DSM 15236 / T118) (Rhodoferax ferrireducens).